An 875-amino-acid polypeptide reads, in one-letter code: Phospholipase DDHD1 (875 aa).

3 disordered regions span residues 1–30 (MNYP…LGSD), 101–153 (LRYY…GAAA), and 206–231 (RAQD…SVED). Residues Ser-8 and Ser-11 each carry the phosphoserine modification. A compositionally biased stretch (gly residues) spans 130–140 (SGGGGAAGGGP). The segment covering 217–228 (GPASPAGPASSS) has biased composition (low complexity). Residue Ser-540 is part of the active site. The DDHD domain occupies 614–861 (LKFKVENFFC…ALFLLTFMYK (248 aa)). Ser-726 bears the Phosphoserine mark. The disordered stretch occupies residues 770–804 (RSSASQPSETSRDSIEDEKKPVASPPMTTVATQTL). The span at 779 to 790 (TSRDSIEDEKKP) shows a compositional bias: basic and acidic residues. Positions 795 to 804 (PMTTVATQTL) are enriched in polar residues.

The protein belongs to the PA-PLA1 family. Forms homooligomers and, to a much smaller extent, heterooligomers with DDHD2. Interacts with SEC23A and SEC24C. As to expression, expressed in mature testis.

The protein localises to the cytoplasm. The enzyme catalyses a 1,2-diacyl-sn-glycero-3-phosphate + H2O = a 2-acyl-sn-glycerol 3-phosphate + a fatty acid + H(+). It carries out the reaction a 1,2-diacyl-sn-glycero-3-phospho-(1D-myo-inositol) + H2O = a 2-acyl-sn-glycero-3-phospho-D-myo-inositol + a fatty acid + H(+). The catalysed reaction is 1-octadecanoyl-2-(5Z,8Z,11Z,14Z-eicosatetraenoyl)-sn-glycero-3-phospho-(1D-myo-inositol) + H2O = 2-(5Z,8Z,11Z,14Z-eicosatetraenoyl)-sn-glycero-3-phospho-(1D-myo-inositol) + octadecanoate + H(+). It catalyses the reaction a 1-acyl-2-(5Z,8Z,11Z,14Z-eicosatetraenoyl)-sn-glycero-3-phospho-(1D-myo-inositol) + H2O = 2-(5Z,8Z,11Z,14Z-eicosatetraenoyl)-sn-glycero-3-phospho-(1D-myo-inositol) + a fatty acid + H(+). The enzyme catalyses 1,2-dihexadecanoyl-sn-glycero-3-phospho-(1D-myo-inositol) + H2O = 2-hexadecanoyl-sn-glycero-3-phospho-(1D-myo-inositol) + hexadecanoate + H(+). It carries out the reaction 1,2-di-(9Z-octadecenoyl)-sn-glycero-3-phosphate + H2O = 2-(9Z-octadecenoyl)-sn-glycero-3-phosphate + (9Z)-octadecenoate + H(+). The catalysed reaction is a 1-acyl-2-(5Z,8Z,11Z,14Z)-eicosatetraenoyl-sn-glycero-3-phosphate + H2O = 2-(5Z,8Z,11Z,14Z-eicosatetraenoyl)-sn-glycero-3-phosphate + a fatty acid + H(+). It catalyses the reaction 1-hexadecanoyl-2-(9Z-octadecenoyl)-sn-glycero-3-phosphate + H2O = 2-(9Z-octadecenoyl)-sn-glycero-3-phosphate + hexadecanoate + H(+). The enzyme catalyses 1-hexadecanoyl-2-(9Z-octadecenoyl)-sn-glycero-3-phospho-L-serine + H2O = 2-(9Z-octadecenoyl)-sn-glycero-3-phospho-L-serine + hexadecanoate + H(+). It carries out the reaction 1,2-di-(5Z,8Z,11Z,14Z)-eicosatetraenoyl-sn-glycero-3-phosphate + H2O = 2-(5Z,8Z,11Z,14Z-eicosatetraenoyl)-sn-glycero-3-phosphate + (5Z,8Z,11Z,14Z)-eicosatetraenoate + H(+). The catalysed reaction is 1-octadecanoyl-2-(5Z,8Z,11Z,14Z-eicosatetraenoyl)-sn-glycero-3-phosphate + H2O = 2-(5Z,8Z,11Z,14Z-eicosatetraenoyl)-sn-glycero-3-phosphate + octadecanoate + H(+). It catalyses the reaction a 1,2-diacyl-sn-glycero-3-phosphocholine + H2O = a 2-acyl-sn-glycero-3-phosphocholine + a fatty acid + H(+). The enzyme catalyses a 1,2-diacyl-sn-glycero-3-phosphoethanolamine + H2O = a 2-acyl-sn-glycero-3-phosphoethanolamine + a fatty acid + H(+). It carries out the reaction a 1,2-diacyl-sn-glycero-3-phospho-L-serine + H2O = a 2-acyl-sn-glycero-3-phospho-L-serine + a fatty acid + H(+). The catalysed reaction is a 1,2-diacyl-sn-glycero-3-phospho-(1'-sn-glycerol) + H2O = 2-acyl-sn-glycero-3-phospho-(1'-sn-glycerol) + a fatty acid + H(+). It catalyses the reaction 1-hexadecanoyl-2-(9Z-octadecenoyl)-sn-glycero-3-phospho-(1'-sn-glycerol) + H2O = 2-(9Z-octadecenoyl)-sn-glycero-3-phospho-(1'-sn-glycerol) + hexadecanoate + H(+). The enzyme catalyses 1-acyl-2-(5Z,8Z,11Z,14Z-eicosatetraenoyl)-sn-glycero-3-phosphocholine + H2O = 2-(5Z,8Z,11Z,14Z)-eicosatetraenoyl-sn-glycero-3-phosphocholine + a fatty acid + H(+). It carries out the reaction 1-acyl-2-(5Z,8Z,11Z,14Z)-eicosatetraenoyl-sn-glycero-3-phosphoethanolamine + H2O = 2-(5Z,8Z,11Z,14Z)-eicosatetraenoyl-sn-glycero-3-phosphoethanolamine + a fatty acid + H(+). The catalysed reaction is 1-(9Z-octadecenoyl)-2-(7Z,10Z,13Z,16Z,19Z-docosapentaenoyl)-sn-glycero-3-phospho-1D-myo-inositol + H2O = 2-(7Z,10Z,13Z,16Z,19Z-docosapentaenoyl)-sn-glycero-3-phospho-1D-myo-inositol + (9Z)-octadecenoate + H(+). It catalyses the reaction 1-(9Z-octadecenoyl)-2-(5Z,8Z,11Z,14Z-eicosatetraenoyl)-sn-glycero-3-phospho-1D-myo-inositol + H2O = 2-(5Z,8Z,11Z,14Z-eicosatetraenoyl)-sn-glycero-3-phospho-(1D-myo-inositol) + (9Z)-octadecenoate + H(+). The enzyme catalyses 1,2-di-(9Z-octadecenoyl)-sn-glycero-3-phospho-1D-myo-inositol + H2O = 2-(9Z-octadecenoyl)-sn-glycero-3-phospho-1D-myo-inositol + (9Z)-octadecenoate + H(+). It carries out the reaction 1-(9Z-octadecenoyl)-2-(8Z,11Z,14Z-eicosatrienoyl)-sn-glycero-3-phospho-1D-myo-inositol + H2O = 2-(8Z,11Z,14Z-eicosatrienoyl)-sn-glycero-3-phospho-1D-myo-inositol + (9Z)-octadecenoate + H(+). The catalysed reaction is 1,2-di-(9Z-octadecenoyl)-sn-glycero-3-phosphocholine + H2O = (9Z-octadecenoyl)-sn-glycero-3-phosphocholine + (9Z)-octadecenoate + H(+). The protein operates within phospholipid metabolism; phosphatidylinositol metabolism. Phospholipase A1 (PLA1) that hydrolyzes ester bonds at the sn-1 position of glycerophospholipids producing a free fatty acid and a lysophospholipid. Prefers phosphatidate (1,2-diacyl-sn-glycero-3-phosphate, PA) as substrate in vitro, but can efficiently hydrolyze phosphatidylinositol (1,2-diacyl-sn-glycero-3-phospho-(1D-myo-inositol), PI), as well as a range of other glycerophospholipid substrates such as phosphatidylcholine (1,2-diacyl-sn-glycero-3-phosphocholine, PC), phosphatidylethanolamine (1,2-diacyl-sn-glycero-3-phosphoethanolamine, PE), phosphatidylserine (1,2-diacyl-sn-glycero-3-phospho-L-serine, PS) and phosphatidylglycerol (1,2-diacyl-sn-glycero-3-phospho-(1'-sn-glycerol), PG). Involved in the regulation of the endogenous content of polyunsaturated PI and PS lipids in the nervous system. Changes in these lipids extend to downstream metabolic products like PI phosphates PIP and PIP2, which play fundamental roles in cell biology. Regulates mitochondrial morphology. These dynamic changes may be due to PA hydrolysis at the mitochondrial surface. May play a regulatory role in spermatogenesis or sperm function. This chain is Phospholipase DDHD1 (DDHD1), found in Bos taurus (Bovine).